Consider the following 401-residue polypeptide: Large ribosomal subunit protein uL3 (401 aa).

Residues 1–21 (MSHRKFSAPRHGHMGFTPKKR) are disordered.

It belongs to the universal ribosomal protein uL3 family.

The protein localises to the cytoplasm. Functionally, the L3 protein is a component of the large subunit of cytoplasmic ribosomes. This is Large ribosomal subunit protein uL3 (rpl-3) from Caenorhabditis briggsae.